The following is a 112-amino-acid chain: uncharacterized protein (112 aa).

A helical membrane pass occupies residues 82 to 104 (IFFGFSIIASYFLKFHLLYVILL).

It localises to the membrane. This is an uncharacterized protein from Pasteurella multocida (strain Pm70).